Reading from the N-terminus, the 359-residue chain is 3-isopropylmalate dehydrogenase (359 aa).

76 to 89 (GPKWDDPSAKTRPE) contacts NAD(+). Residues Arg-96, Arg-106, Arg-134, and Asp-223 each coordinate substrate. Mg(2+)-binding residues include Asp-223, Asp-247, and Asp-251. Position 281–293 (281–293 (GSAPDIAGKSVAN)) interacts with NAD(+).

It belongs to the isocitrate and isopropylmalate dehydrogenases family. LeuB type 1 subfamily. In terms of assembly, homodimer. It depends on Mg(2+) as a cofactor. Mn(2+) is required as a cofactor.

Its subcellular location is the cytoplasm. It carries out the reaction (2R,3S)-3-isopropylmalate + NAD(+) = 4-methyl-2-oxopentanoate + CO2 + NADH. It participates in amino-acid biosynthesis; L-leucine biosynthesis; L-leucine from 3-methyl-2-oxobutanoate: step 3/4. In terms of biological role, catalyzes the oxidation of 3-carboxy-2-hydroxy-4-methylpentanoate (3-isopropylmalate) to 3-carboxy-4-methyl-2-oxopentanoate. The product decarboxylates to 4-methyl-2 oxopentanoate. The chain is 3-isopropylmalate dehydrogenase from Rhodopirellula baltica (strain DSM 10527 / NCIMB 13988 / SH1).